The primary structure comprises 245 residues: 1-(5-phosphoribosyl)-5-[(5-phosphoribosylamino)methylideneamino] imidazole-4-carboxamide isomerase (245 aa).

D7 (proton acceptor) is an active-site residue. D129 serves as the catalytic Proton donor.

Belongs to the HisA/HisF family.

Its subcellular location is the cytoplasm. It carries out the reaction 1-(5-phospho-beta-D-ribosyl)-5-[(5-phospho-beta-D-ribosylamino)methylideneamino]imidazole-4-carboxamide = 5-[(5-phospho-1-deoxy-D-ribulos-1-ylimino)methylamino]-1-(5-phospho-beta-D-ribosyl)imidazole-4-carboxamide. The protein operates within amino-acid biosynthesis; L-histidine biosynthesis; L-histidine from 5-phospho-alpha-D-ribose 1-diphosphate: step 4/9. In Aliivibrio salmonicida (strain LFI1238) (Vibrio salmonicida (strain LFI1238)), this protein is 1-(5-phosphoribosyl)-5-[(5-phosphoribosylamino)methylideneamino] imidazole-4-carboxamide isomerase.